The chain runs to 268 residues: Putative esterase/lipase 1 (268 aa).

The active site involves H27. Catalysis depends on S94, which acts as the Charge relay system.

It belongs to the lipase/esterase LIP3/BchO family.

The sequence is that of Putative esterase/lipase 1 from Mycoplasma genitalium (strain ATCC 33530 / DSM 19775 / NCTC 10195 / G37) (Mycoplasmoides genitalium).